Reading from the N-terminus, the 68-residue chain is Amphipathic peptide OcyC1 (68 aa).

The signal sequence occupies residues 1–23 (MKAQLCILLIALVLFQTFSQSDA). Phe-36 is modified (phenylalanine amide). Residues 38-68 (RRGLNDLDDLDELFDGEISQADVDFLNELMR) constitute a propeptide that is removed on maturation.

The protein belongs to the non-disulfide-bridged peptide (NDBP) superfamily. Short antimicrobial peptide (group 4) family. As to expression, expressed by the venom gland.

It localises to the secreted. The protein resides in the target cell membrane. In terms of biological role, antimicrobial peptide. Inhibits the growth of Gram-positive and Gram-negative bacteria. Shows antifungal activity with MIC values ranging from 12.5 to 25 uM. Also shows an inhibitory activity on C.albicans biofilms at high concentrations. Shows low cytotoxic activity and has weak hemolytic activity. This chain is Amphipathic peptide OcyC1, found in Opisthacanthus cayaporum (South American scorpion).